A 573-amino-acid chain; its full sequence is Proline--tRNA ligase (573 aa).

Belongs to the class-II aminoacyl-tRNA synthetase family. ProS type 1 subfamily. Homodimer.

It is found in the cytoplasm. The catalysed reaction is tRNA(Pro) + L-proline + ATP = L-prolyl-tRNA(Pro) + AMP + diphosphate. Catalyzes the attachment of proline to tRNA(Pro) in a two-step reaction: proline is first activated by ATP to form Pro-AMP and then transferred to the acceptor end of tRNA(Pro). As ProRS can inadvertently accommodate and process non-cognate amino acids such as alanine and cysteine, to avoid such errors it has two additional distinct editing activities against alanine. One activity is designated as 'pretransfer' editing and involves the tRNA(Pro)-independent hydrolysis of activated Ala-AMP. The other activity is designated 'posttransfer' editing and involves deacylation of mischarged Ala-tRNA(Pro). The misacylated Cys-tRNA(Pro) is not edited by ProRS. This Limosilactobacillus fermentum (strain NBRC 3956 / LMG 18251) (Lactobacillus fermentum) protein is Proline--tRNA ligase.